Reading from the N-terminus, the 494-residue chain is Sphingosine-1-phosphate transporter MFSD2B (494 aa).

A compositionally biased stretch (pro residues) spans 1 to 12; that stretch reads MSVPHGPTPAPV. Positions 1 to 26 are disordered; sequence MSVPHGPTPAPVAEPHTQEPGSDKRD. 10 helical membrane-spanning segments follow: residues 103–123, 140–160, 179–199, 223–243, 277–297, 310–330, 339–359, 360–380, 402–422, and 449–469; these read LMPWALGCMPLIALAYFFLWF, CLFQALATFFQVPYTALTMIL, MAGTLMGATVHGLIVSSAHGS, IAAAVVALTYPVCGSLLCLGV, VVSFLFISAAVQVEQSYLVLF, NLVLIILVSAVLSTPLWEWVL, AFGICVMVPFSILLAAVPSAP, VAYVVAFVSGVSIAVSLLLPW, TIFYSSYVFFTKLSGAGALGI, and VLIGAVPTCMILIGLCILLVG. Residues 473–494 form a disordered region; it reads KMPRQDTSSQLSLRRRTSYSLA. Residues 485-494 are compositionally biased toward basic residues; the sequence is LRRRTSYSLA.

This sequence belongs to the major facilitator superfamily. As to expression, widely expressed with highest expression in spleen, lung and testis. Predominantly expressed in erythroid lineages giving rise to erythrocytes and platelets, but absent in lymphoid lineages.

It localises to the cell membrane. The catalysed reaction is sphing-4-enine 1-phosphate(in) = sphing-4-enine 1-phosphate(out). The enzyme catalyses sphinganine 1-phosphate(in) = sphinganine 1-phosphate(out). It carries out the reaction sphinga-4E,14Z-dienine-1-phosphate(in) = sphinga-4E,14Z-dienine-1-phosphate(out). Its function is as follows. Lipid transporter that specifically mediates export of sphingosine-1-phosphate in red blood cells and platelets. Sphingosine-1-phosphate is a signaling sphingolipid and its export from red blood cells into in the plasma is required for red blood cell morphology. Sphingosine-1-phosphate export from platelets is required for platelet aggregation and thrombus formation. Mediates the export of different sphingosine-1-phosphate (S1P) species, including S1P(d18:0) (sphinganine 1-phosphate), S1P (d18:1) (sphing-4-enine 1-phosphate) and S1P (d18:2) (sphinga-4E,14Z-dienine-1-phosphate). Release of sphingosine-1-phosphate is facilitated by a proton gradient. In contrast, cations, such as sodium, are not required to drive sphingosine-1-phosphate transport. In addition to export, also able to mediate S1P import. Does not transport lysophosphatidylcholine (LPC). The protein is Sphingosine-1-phosphate transporter MFSD2B of Mus musculus (Mouse).